The chain runs to 646 residues: Threonine--tRNA ligase (646 aa).

The TGS domain occupies 1–61 (MIKITFPDGN…NEDSNFEIVT (61 aa)). The interval 242-540 (DHRKLGRELD…LIEVYKGAFP (299 aa)) is catalytic. Zn(2+) contacts are provided by Cys-336, His-387, and His-517.

The protein belongs to the class-II aminoacyl-tRNA synthetase family. As to quaternary structure, homodimer. Requires Zn(2+) as cofactor.

The protein resides in the cytoplasm. The catalysed reaction is tRNA(Thr) + L-threonine + ATP = L-threonyl-tRNA(Thr) + AMP + diphosphate + H(+). Catalyzes the attachment of threonine to tRNA(Thr) in a two-step reaction: L-threonine is first activated by ATP to form Thr-AMP and then transferred to the acceptor end of tRNA(Thr). Also edits incorrectly charged L-seryl-tRNA(Thr). This chain is Threonine--tRNA ligase, found in Lactococcus lactis subsp. lactis (strain IL1403) (Streptococcus lactis).